The primary structure comprises 163 residues: Troponin C, skeletal muscle (163 aa).

Ala2 is subject to Blocked amino end (Ala). 4 consecutive EF-hand domains span residues 18–53 (EMIA…LGQN), 54–89 (PTKE…QMKE), 94–129 (KSEE…TGEH), and 130–163 (VTEE…EGVQ). Ca(2+)-binding residues include Asp31, Asp33, Asp37, Glu42, Asp67, Asp69, Ser71, Thr73, Glu78, Asp107, Asn109, Asp111, Glu118, Asp143, Asn145, Asp147, Arg149, and Glu154.

The protein belongs to the troponin C family.

In terms of biological role, troponin is the central regulatory protein of striated muscle contraction. Tn consists of three components: Tn-I which is the inhibitor of actomyosin ATPase, Tn-T which contains the binding site for tropomyosin and Tn-C. The binding of calcium to Tn-C abolishes the inhibitory action of Tn on actin filaments. In Gallus gallus (Chicken), this protein is Troponin C, skeletal muscle (TNNC2).